The sequence spans 239 residues: Endonuclease V (239 aa).

Mg(2+) is bound by residues aspartate 48 and aspartate 116.

The protein belongs to the endonuclease V family. The cofactor is Mg(2+).

It is found in the cytoplasm. It carries out the reaction Endonucleolytic cleavage at apurinic or apyrimidinic sites to products with a 5'-phosphate.. In terms of biological role, DNA repair enzyme involved in the repair of deaminated bases. Selectively cleaves double-stranded DNA at the second phosphodiester bond 3' to a deoxyinosine leaving behind the intact lesion on the nicked DNA. This is Endonuclease V from Xanthomonas oryzae pv. oryzae (strain MAFF 311018).